Consider the following 102-residue polypeptide: Small ribosomal subunit protein uS10 (102 aa).

Belongs to the universal ribosomal protein uS10 family. In terms of assembly, part of the 30S ribosomal subunit.

Its function is as follows. Involved in the binding of tRNA to the ribosomes. The chain is Small ribosomal subunit protein uS10 from Geotalea daltonii (strain DSM 22248 / JCM 15807 / FRC-32) (Geobacter daltonii).